Consider the following 123-residue polypeptide: Large ribosomal subunit protein uL14 (123 aa).

This sequence belongs to the universal ribosomal protein uL14 family. In terms of assembly, part of the 50S ribosomal subunit. Forms a cluster with proteins L3 and L19. In the 70S ribosome, L14 and L19 interact and together make contacts with the 16S rRNA in bridges B5 and B8.

Its function is as follows. Binds to 23S rRNA. Forms part of two intersubunit bridges in the 70S ribosome. This is Large ribosomal subunit protein uL14 from Serratia proteamaculans (strain 568).